A 761-amino-acid chain; its full sequence is RNA-binding protein 12B (761 aa).

Residues Ser98, Ser101, and Ser112 each carry the phosphoserine modification. Lys114 is covalently cross-linked (Glycyl lysine isopeptide (Lys-Gly) (interchain with G-Cter in SUMO2)). Positions 120-147 are disordered; it reads SGYGSSINQDAGFHSNGTGHGNLRPRKT. A Glycyl lysine isopeptide (Lys-Gly) (interchain with G-Cter in SUMO2) cross-link involves residue Lys151. The 76-residue stretch at 155 to 230 folds into the RRM 1 domain; sequence PYLFLRGLPY…RFIEVMQGSE (76 aa). A compositionally biased stretch (basic and acidic residues) spans 247 to 262; sequence LRRSEEHSPPRGINDR. Residues 247 to 278 form a disordered region; that stretch reads LRRSEEHSPPRGINDRHFRKRSHSKSPRRTRS. 2 positions are modified to phosphoserine: Ser250 and Ser254. A compositionally biased stretch (basic residues) spans 263 to 278; that stretch reads HFRKRSHSKSPRRTRS. At Thr276 the chain carries Phosphothreonine. A phosphoserine mark is found at Ser278, Ser280, Ser292, and Ser294. The RRM 2 domain maps to 284–360; it reads FYVHLKNLSL…RPVHIDPISR (77 aa). Lys319 carries the N6-acetyllysine modification. A Glycyl lysine isopeptide (Lys-Gly) (interchain with G-Cter in SUMO2) cross-link involves residue Lys335. Residues 372–384 are compositionally biased toward basic and acidic residues; sequence KKRSGSPERDRPG. The segment at 372–392 is disordered; the sequence is KKRSGSPERDRPGHVSQKYSQ. Ser377 is modified (phosphoserine). The region spanning 400–477 is the RRM 3 domain; sequence LCIYIRNFPF…TEVLLRLISE (78 aa). Residues Lys514 and Lys541 each participate in a glycyl lysine isopeptide (Lys-Gly) (interchain with G-Cter in SUMO2) cross-link. Residues 538–621 show a composition bias toward basic and acidic residues; it reads DNFKHPQRDF…RHPREEDWRR (84 aa). The tract at residues 538–690 is disordered; it reads DNFKHPQRDF…THQMKTSGAL (153 aa). Residues Ser575 and Ser591 each carry the phosphoserine modification. The segment covering 627-654 has biased composition (polar residues); the sequence is LQSTSGGHPQSISGGHPQSISGARPRST. Low complexity predominate over residues 661 to 672; the sequence is SISGGRLRSISG.

The polypeptide is RNA-binding protein 12B (RBM12B) (Pongo abelii (Sumatran orangutan)).